We begin with the raw amino-acid sequence, 432 residues long: Probable exopolygalacturonase C (432 aa).

Positions 1–20 (MPISKGIFLSLLSTLPLALA) are cleaved as a signal peptide. Residues Asn-33, Asn-73, Asn-90, and Asn-140 are each glycosylated (N-linked (GlcNAc...) asparagine). 2 PbH1 repeats span residues 206-227 (GTNIRISDSVMYNGDDAIAVGS) and 229-250 (SHDIVFERNTIGYQSHGMSIGS). The Proton donor role is filled by Asp-220. The active site involves His-244. An N-linked (GlcNAc...) asparagine glycan is attached at Asn-260. One copy of the PbH1 3 repeat lies at 261-282 (ITNLRFEDVTVIDALYAARFKS). Asn-292 and Asn-302 each carry an N-linked (GlcNAc...) asparagine glycan. A disulfide bond links Cys-377 and Cys-383. Asn-407 carries N-linked (GlcNAc...) asparagine glycosylation.

The protein belongs to the glycosyl hydrolase 28 family.

It localises to the secreted. The enzyme catalyses [(1-&gt;4)-alpha-D-galacturonosyl](n) + H2O = alpha-D-galacturonate + [(1-&gt;4)-alpha-D-galacturonosyl](n-1). Specific in hydrolyzing the terminal glycosidic bond of polygalacturonic acid and oligogalacturonates. This is Probable exopolygalacturonase C (pgxC) from Aspergillus terreus (strain NIH 2624 / FGSC A1156).